The sequence spans 357 residues: UDP-xylose transporter 3 (357 aa).

Transmembrane regions (helical) follow at residues 7–27 (FQLG…SIVI), 31–51 (ALIS…HLLV), 75–95 (VMGF…SLGF), 100–120 (FYQM…TLFF), 132–152 (LTIL…LNML), 154–174 (SVLS…TNTI), 194–214 (AITL…QNVF), 224–244 (FFIV…FLVI), 250–270 (VTYQ…GYVL), and 280–300 (ILGI…CSIE). Position 334 is a phosphoserine (S334).

It belongs to the TPT transporter family. TPT (TC 2.A.7.9) subfamily. As to expression, ubiquitous.

Its subcellular location is the golgi apparatus membrane. In terms of biological role, nucleotide-sugar transporter that transports UDP-xylose and UMP in a strict counter-exchange mode. The protein is UDP-xylose transporter 3 of Arabidopsis thaliana (Mouse-ear cress).